A 152-amino-acid polypeptide reads, in one-letter code: Ribosome maturation factor RimP (152 aa).

This sequence belongs to the RimP family.

Its subcellular location is the cytoplasm. Its function is as follows. Required for maturation of 30S ribosomal subunits. The chain is Ribosome maturation factor RimP from Burkholderia lata (strain ATCC 17760 / DSM 23089 / LMG 22485 / NCIMB 9086 / R18194 / 383).